The primary structure comprises 223 residues: Endonuclease NucS (223 aa).

It belongs to the NucS endonuclease family.

The protein resides in the cytoplasm. In terms of biological role, cleaves both 3' and 5' ssDNA extremities of branched DNA structures. The polypeptide is Endonuclease NucS (Streptomyces griseus subsp. griseus (strain JCM 4626 / CBS 651.72 / NBRC 13350 / KCC S-0626 / ISP 5235)).